A 194-amino-acid chain; its full sequence is Imidazoleglycerol-phosphate dehydratase (194 aa).

This sequence belongs to the imidazoleglycerol-phosphate dehydratase family.

It localises to the cytoplasm. It carries out the reaction D-erythro-1-(imidazol-4-yl)glycerol 3-phosphate = 3-(imidazol-4-yl)-2-oxopropyl phosphate + H2O. The protein operates within amino-acid biosynthesis; L-histidine biosynthesis; L-histidine from 5-phospho-alpha-D-ribose 1-diphosphate: step 6/9. This chain is Imidazoleglycerol-phosphate dehydratase, found in Bacillus subtilis (strain 168).